The primary structure comprises 414 residues: Glucose-1-phosphate adenylyltransferase (414 aa).

Residues Gly-164, 181–182, and Ser-199 each bind alpha-D-glucose 1-phosphate; that span reads EK.

It belongs to the bacterial/plant glucose-1-phosphate adenylyltransferase family. In terms of assembly, homotetramer.

It catalyses the reaction alpha-D-glucose 1-phosphate + ATP + H(+) = ADP-alpha-D-glucose + diphosphate. It participates in glycan biosynthesis; glycogen biosynthesis. In terms of biological role, involved in the biosynthesis of ADP-glucose, a building block required for the elongation reactions to produce glycogen. Catalyzes the reaction between ATP and alpha-D-glucose 1-phosphate (G1P) to produce pyrophosphate and ADP-Glc. This Leifsonia xyli subsp. xyli (strain CTCB07) protein is Glucose-1-phosphate adenylyltransferase.